Reading from the N-terminus, the 688-residue chain is Polyribonucleotide nucleotidyltransferase (688 aa).

Residues Asp484 and Asp490 each contribute to the Mg(2+) site. One can recognise a KH domain in the interval 550 to 609; that stretch reads PTTEIFNVAPDKIVEIIGQGGRVIKEIVEKFEVKIDLNKPSGEVKIMGNKERVLKTKEFI. One can recognise an S1 motif domain in the interval 626-688; sequence DEVLEAQVKR…NKGKIALDLA (63 aa).

It belongs to the polyribonucleotide nucleotidyltransferase family. Requires Mg(2+) as cofactor.

The protein localises to the cytoplasm. It carries out the reaction RNA(n+1) + phosphate = RNA(n) + a ribonucleoside 5'-diphosphate. In terms of biological role, involved in mRNA degradation. Catalyzes the phosphorolysis of single-stranded polyribonucleotides processively in the 3'- to 5'-direction. This is Polyribonucleotide nucleotidyltransferase from Helicobacter pylori (strain HPAG1).